The sequence spans 1036 residues: MKFFALFIQRPVATTLLSLAITLCGVLGFTLLPVSPLPQVDFPVISVYASLPGASPETMASSVATPLEHALGRIAGVNEMTSSSSLGSTNITLEFDLNRDINSAARDVQAALNAAQSLLPSGMPSRPHYYKVNPTDAPIMILTLTSDTYNQGQLYDFASTQLAQKIAQVEGVSEVSVGGSSLPAVRVELNPGVLFHQGVSLDAVRKAISNANVRRPQGYVDSEQQHWQIQMNDELKTAENYRPIIVHYNNNSPVRLQDVANVKDSVQNVRAAGMSGGEPAILLIIRREAGANIIATVNRIREQLPALHESIPASIQLKVAQDRTPTIRASIVEVERALVIAIGLVILVVFLFLRSGRATLIPAIAVPVSLIGTFTAMYLCGFSLNNLSLMALTVATGFVVDDAIVVLENISRHLEAGIKPMQAALQGVREVGFTVLSMSISLVAVFIPLLLMDGLVGRLFREFAITLTTSISISLLVSLTLTPMMCAHLLKSQRPKAQKKIRGFGKVLLKIQQVYGRSLMWVLNHSRWVLLILAGIIALNVWLYINIPKTFFPEQDTGRLLGFVRADQSISFQSMREKMKNFMQTINADPTVDSVIGFTGGGRVNNGFMFISLKPLKERSENAEQIISRLRIKLANEPGANLFLIPVQDIRAGGRQANASYQFTLLADDLNDLRKWEPVIRKALGQLPQLTDVNSDKEDKGAEMAIIYDRDTMSRLGINVSEANNLLNNAFGQRQISTIYQPLNQYKVVMEVAPEYTQDVSALEKMFVINNQGKAIPLSYFAHWQPANAPLSVNHQGLSAASTIAFNVPEGYTLSDAINAIERTTTELRVPSTVRGTFAGTAQIFQETLKSQLFLILAAIITVYLVLGILYESYIHPLTILSTLPSAGIGALLALELFDTPFSLIALIGIMLLIGIVKKNAIIMVDFAIEAQRNGNICARDAIFQASLLRFRPILMTTLAALFGSLPLVLSSGDGTELRQPLGITIVGGLVMSQLLTLYTTPVVYLCFDRLRAYPNRRNCCRQFEHGQRGKTGTYT.

10 consecutive transmembrane segments (helical) span residues 12–34, 336–353, 360–382, 431–450, 463–485, 528–547, 853–875, 895–917, 949–971, and 986–1008; these read VATTLLSLAITLCGVLGFTLLPV, RALVIAIGLVILVVFLFL, LIPAIAVPVSLIGTFTAMYLCGF, VGFTVLSMSISLVAVFIPLL, FAITLTTSISISLLVSLTLTPMM, WVLLILAGIIALNVWLYINI, LFLILAAIITVYLVLGILYESYI, LELFDTPFSLIALIGIMLLIGIV, LRFRPILMTTLAALFGSLPLVLS, and IVGGLVMSQLLTLYTTPVVYLCF.

This sequence belongs to the resistance-nodulation-cell division (RND) (TC 2.A.6) family. MdtC subfamily. Part of a tripartite efflux system composed of MdtA, MdtB and MdtC. MdtC forms a heteromultimer with MdtB.

It localises to the cell inner membrane. The protein is Multidrug resistance protein MdtC of Photorhabdus laumondii subsp. laumondii (strain DSM 15139 / CIP 105565 / TT01) (Photorhabdus luminescens subsp. laumondii).